The chain runs to 309 residues: uncharacterized protein (309 aa).

This is an uncharacterized protein from Aedes vexans (Inland floodwater mosquito).